We begin with the raw amino-acid sequence, 630 residues long: tRNA uridine 5-carboxymethylaminomethyl modification enzyme MnmG (630 aa).

FAD is bound at residue 13–18; the sequence is GGGHAG. 273–287 contacts NAD(+); that stretch reads GPRYCPSIEDKIHRF.

This sequence belongs to the MnmG family. In terms of assembly, homodimer. Heterotetramer of two MnmE and two MnmG subunits. Requires FAD as cofactor.

The protein localises to the cytoplasm. Its function is as follows. NAD-binding protein involved in the addition of a carboxymethylaminomethyl (cmnm) group at the wobble position (U34) of certain tRNAs, forming tRNA-cmnm(5)s(2)U34. This chain is tRNA uridine 5-carboxymethylaminomethyl modification enzyme MnmG, found in Pseudomonas putida (strain ATCC 700007 / DSM 6899 / JCM 31910 / BCRC 17059 / LMG 24140 / F1).